Here is an 884-residue protein sequence, read N- to C-terminus: Androgen receptor (884 aa).

Positions 1-522 (MEVQLGLGRV…PIDYYFPPQK (522 aa)) are modulating. The interaction with ZNF318 stretch occupies residues 1 to 551 (MEVQLGLGRV…GSCKVFFKRA (551 aa)). Disordered stretches follow at residues 33–145 (VIQN…TLSL) and 174–207 (QQQQQEAVSEGSSSGRAREAAGAPTSSKDSYLGG). Composition is skewed to low complexity over residues 55–79 (QQQQETSPPQQQQQQQGEDGSPQAQ) and 174–196 (QQQQQEAVSEGSSSGRAREAAGA). A Phosphoserine; by CDK9 modification is found at Ser61. Ser75 bears the Phosphoserine mark. The span at 197 to 207 (PTSSKDSYLGG) shows a compositional bias: polar residues. Tyr204 is subject to Phosphotyrosine; by CSK. Residue Ser237 is modified to Phosphoserine. Tyr248 carries the post-translational modification Phosphotyrosine; by CSK and TNK2. The segment at 275-294 (DDSADKGTEEPAEYTPFKGS) is disordered. A phosphotyrosine; by CSK mark is found at Tyr288, Tyr327, Tyr338, and Tyr343. At Tyr344 the chain carries Phosphotyrosine; by CSK and TNK2. A Glycyl lysine isopeptide (Lys-Gly) (interchain with G-Cter in SUMO) cross-link involves residue Lys367. Tyr374 carries the phosphotyrosine; by CSK modification. A Glycyl lysine isopeptide (Lys-Gly) (interchain with G-Cter in SUMO) cross-link involves residue Lys485. Residues Tyr499 and Tyr516 each carry the phosphotyrosine; by CSK modification. Residues 516 to 883 (YYFPPQKTCL…GKVKPIYFHT (368 aa)) form an interaction with LPXN region. Residues 523–596 (TCLICGDEAS…AGMTLGARKL (74 aa)) constitute a DNA-binding region (nuclear receptor). NR C4-type zinc fingers lie at residues 524–544 (CLICGDEASGCHYGALTCGSC) and 560–584 (CASRNDCTIDKFRRKNCPSCRLRKC). An interaction with HIPK3 region spans residues 536 to 626 (YGALTCGSCK…TEESSQKLTV (91 aa)). The segment at 556 to 883 (QKYLCASRND…GKVKPIYFHT (328 aa)) is interaction with CCAR1. Residues 589-883 (MTLGARKLKK…GKVKPIYFHT (295 aa)) form an interaction with KAT7 region. Phosphoserine; by STK4/MST1 is present on Ser615. In terms of domain architecture, NR LBD spans 633-864 (ECQPIFLNVL…DFPEMMAEII (232 aa)). Residues Asn670 and Arg717 each coordinate 17beta-hydroxy-5alpha-androstan-3-one. Glycyl lysine isopeptide (Lys-Gly) (interchain with G-Cter in ubiquitin) cross-links involve residues Lys810 and Lys812. Residue Thr842 participates in 17beta-hydroxy-5alpha-androstan-3-one binding. Tyr880 carries the phosphotyrosine; by CSK modification.

The protein belongs to the nuclear hormone receptor family. NR3 subfamily. Binds DNA as a homodimer. Part of a ternary complex containing AR, EFCAB6/DJBP and PARK7. Interacts with HIPK3 and NR0B2 in the presence of androgen. The ligand binding domain interacts with KAT7/HBO1 in the presence of dihydrotestosterone. Interacts with EFCAB6/DJBP, PQBP1, RANBP9, RBAK, SPDEF, SRA1, TGFB1I1 and RREB1. Interacts with ZMIZ1/ZIMP10 and ZMIZ2/ZMIP7 which both enhance its transactivation activity. Interacts with SLC30A9 and RAD54L2/ARIP4. Interacts with MACROD1 (via macro domain). Interacts via the ligand-binding domain with LXXLL and FXXLF motifs from NCOA1, NCOA2, NCOA3 and MAGEA11. Interacts (via nuclear receptor DNA binding domain and nuclear receptor ligand binding domain) with NCOA4. The AR N-terminal poly-Gln region binds Ran resulting in enhancement of AR-mediated transactivation. Ran-binding decreases as the poly-Gln length increases. Interacts with HIP1 (via coiled coil domain). Interacts (via ligand-binding domain) with TRIM68. Interacts with TNK2. Interacts with USP26. Interacts with RNF6. Interacts (regulated by RNF6 probably through polyubiquitination) with RNF14; regulates AR transcriptional activity. Interacts with PRMT2 and TRIM24. Interacts with RACK1. Interacts with RANBP10; this interaction enhances dihydrotestosterone-induced AR transcriptional activity. Interacts with PRPF6 in a hormone-independent way; this interaction enhances dihydrotestosterone-induced AR transcriptional activity. Interacts with STK4/MST1. Interacts with ZIPK/DAPK3. Interacts with LPXN. Interacts with MAK. Part of a complex containing AR, MAK and NCOA3. Interacts with CRY1. Interacts with CCAR1 and GATA2. Interacts with ZNF318. Interacts with BUD31. Interacts with ARID4A. Interacts with ARID4B. Interacts (via NR LBD domain) with ZBTB7A; the interaction is direct and androgen-dependent. Interacts with NCOR1. Interacts with NCOR2. Interacts with CRY2 in a ligand-dependent manner. Phosphorylated in prostate cancer cells in response to several growth factors including EGF. Phosphorylation is induced by c-Src kinase (CSK). Tyr-499 is one of the major phosphorylation sites and an increase in phosphorylation and Src kinase activity is associated with prostate cancer progression. Phosphorylation by TNK2 enhances the DNA-binding and transcriptional activity. Phosphorylation at Ser-61 by CDK9 regulates AR promoter selectivity and cell growth. In terms of processing, sumoylated on Lys-367 (major) and Lys-485. Ubiquitinated. Deubiquitinated by USP26. 'Lys-6' and 'Lys-27'-linked polyubiquitination by RNF6 modulates AR transcriptional activity and specificity. Post-translationally, palmitoylated by ZDHHC7 and ZDHHC21. Palmitoylation is required for plasma membrane targeting and for rapid intracellular signaling via ERK and AKT kinases and cAMP generation.

It is found in the nucleus. The protein localises to the cytoplasm. In terms of biological role, steroid hormone receptors are ligand-activated transcription factors that regulate eukaryotic gene expression and affect cellular proliferation and differentiation in target tissues. Transcription factor activity is modulated by bound coactivator and corepressor proteins like ZBTB7A that recruits NCOR1 and NCOR2 to the androgen response elements/ARE on target genes, negatively regulating androgen receptor signaling and androgen-induced cell proliferation. Transcription activation is also down-regulated by NR0B2. Activated, but not phosphorylated, by HIPK3 and ZIPK/DAPK3. This Eulemur fulvus collaris (Collared brown lemur) protein is Androgen receptor (AR).